An 83-amino-acid polypeptide reads, in one-letter code: U5-theraphotoxin-Hs1a 5 (83 aa).

The first 21 residues, 1–21, serve as a signal peptide directing secretion; sequence MKTSMFLTLTGLVLLFVVCYA. A propeptide spanning residues 22 to 49 is cleaved from the precursor; sequence SESEEKEFPKELPSSIFAADSDFKVEER. Intrachain disulfides connect cysteine 51/cysteine 63, cysteine 56/cysteine 68, and cysteine 62/cysteine 75.

This sequence belongs to the neurotoxin 10 (Hwtx-1) family. 51 (Hntx-8) subfamily. Hntx-8 sub-subfamily. Expressed by the venom gland.

It localises to the secreted. In terms of biological role, agglutinates erythrocytes. The protein is U5-theraphotoxin-Hs1a 5 of Cyriopagopus schmidti (Chinese bird spider).